A 429-amino-acid polypeptide reads, in one-letter code: Adenylosuccinate synthetase (429 aa).

Residues 13-19 (GDEGKGK) and 41-43 (GHT) contribute to the GTP site. Aspartate 14 acts as the Proton acceptor in catalysis. Mg(2+) contacts are provided by aspartate 14 and glycine 41. IMP-binding positions include 14-17 (DEGK), 39-42 (NAGH), threonine 130, arginine 144, glutamine 225, threonine 240, and arginine 304. The active-site Proton donor is the histidine 42. 300-306 (ATTGRAR) is a binding site for substrate. Residues arginine 306, 332 to 334 (KLD), and 413 to 415 (STG) contribute to the GTP site.

The protein belongs to the adenylosuccinate synthetase family. As to quaternary structure, homodimer. The cofactor is Mg(2+).

It localises to the cytoplasm. It carries out the reaction IMP + L-aspartate + GTP = N(6)-(1,2-dicarboxyethyl)-AMP + GDP + phosphate + 2 H(+). Its pathway is purine metabolism; AMP biosynthesis via de novo pathway; AMP from IMP: step 1/2. Functionally, plays an important role in the de novo pathway of purine nucleotide biosynthesis. Catalyzes the first committed step in the biosynthesis of AMP from IMP. This is Adenylosuccinate synthetase from Pseudomonas fluorescens (strain SBW25).